The chain runs to 298 residues: GTP cyclohydrolase FolE2 (298 aa).

Belongs to the GTP cyclohydrolase IV family.

The enzyme catalyses GTP + H2O = 7,8-dihydroneopterin 3'-triphosphate + formate + H(+). It functions in the pathway cofactor biosynthesis; 7,8-dihydroneopterin triphosphate biosynthesis; 7,8-dihydroneopterin triphosphate from GTP: step 1/1. Converts GTP to 7,8-dihydroneopterin triphosphate. This is GTP cyclohydrolase FolE2 from Pseudomonas fluorescens (strain Pf0-1).